A 111-amino-acid polypeptide reads, in one-letter code: uncharacterized protein (111 aa).

The region spanning I4–A111 is the HIT domain. A Histidine triad motif motif is present at residues H96–H100.

This is an uncharacterized protein from Chlamydia trachomatis serovar D (strain ATCC VR-885 / DSM 19411 / UW-3/Cx).